Reading from the N-terminus, the 259-residue chain is UPF0739 protein C1orf74 homolog (259 aa).

This sequence belongs to the UPF0739 family.

This chain is UPF0739 protein C1orf74 homolog, found in Danio rerio (Zebrafish).